We begin with the raw amino-acid sequence, 99 residues long: NADH-ubiquinone oxidoreductase chain 4L (99 aa).

3 helical membrane-spanning segments follow: residues 5-25 (IITA…GFII), 30-50 (ILLL…IIIC), and 65-85 (LYIL…LVLF).

The protein belongs to the complex I subunit 4L family.

Its subcellular location is the mitochondrion membrane. The enzyme catalyses a ubiquinone + NADH + 5 H(+)(in) = a ubiquinol + NAD(+) + 4 H(+)(out). In terms of biological role, core subunit of the mitochondrial membrane respiratory chain NADH dehydrogenase (Complex I) that is believed to belong to the minimal assembly required for catalysis. Complex I functions in the transfer of electrons from NADH to the respiratory chain. The immediate electron acceptor for the enzyme is believed to be ubiquinone. The chain is NADH-ubiquinone oxidoreductase chain 4L (ND4L) from Allomyces macrogynus.